A 242-amino-acid chain; its full sequence is Beta-carotene ketolase (242 aa).

The catalysed reaction is all-trans-beta-carotene + 2 AH2 + 2 O2 = echinenone + 2 A + 3 H2O. It catalyses the reaction echinenone + 2 AH2 + 2 O2 = canthaxanthin + 2 A + 3 H2O. It functions in the pathway carotenoid biosynthesis; astaxanthin biosynthesis. In terms of biological role, converts beta-carotene to canthaxanthin via echinenone. The polypeptide is Beta-carotene ketolase (Paracoccus sp. (strain PC1) (Alcaligenes sp. (strain PC1))).